Reading from the N-terminus, the 353-residue chain is Pupal cuticle protein PCP52 (353 aa).

The first 15 residues, 1 to 15, serve as a signal peptide directing secretion; the sequence is MRVLILSAFIACATA. Positions 166–195 are disordered; the sequence is AEAPEGNKDEGNKDSVQVESSATESESDKA. Polar residues predominate over residues 179–189; that stretch reads DSVQVESSATE.

In terms of biological role, component of the cuticle of the pupa of Galleria mellonella. This Galleria mellonella (Greater wax moth) protein is Pupal cuticle protein PCP52 (PCP52).